The primary structure comprises 671 residues: Polyadenylate-binding protein 8 (671 aa).

RRM domains lie at 45–123 (TSLY…YSVR), 133–210 (GNIF…PFVH), 224–301 (TNVY…KAQK), and 327–404 (SNLY…LAQR). The segment at 467–526 (LVPGMRPGGSPMPNFFMPMMQQGQQQQQQQQQQQRPGGGRRGALPQPQQPSPMMQQQMHP) is disordered. Composition is skewed to low complexity over residues 483–501 (MPMM…QQQR) and 508–525 (GALP…QQMH). The PABC domain maps to 573-650 (PIVALATRLA…AMDVLRSVAQ (78 aa)).

The protein belongs to the polyadenylate-binding protein type-1 family. In terms of assembly, interacts with ERD15/CID1. Interacts with Turnip mosaic virus (TuMV) VPg-Pro and RNA-dependent RNA polymerase (RdRp). Expressed predominantly in immature flowers.

The protein localises to the cytoplasm. It is found in the nucleus. Binds the poly(A) tail of mRNA. Appears to be an important mediator of the multiple roles of the poly(A) tail in mRNA biogenesis, stability and translation. During infection with potyvirus TuMV, acts as a potential integral component of the viral replicase complex that could play an important role in the regulation of potyviral RNA-dependent RNA polymerase (RdRp). The polypeptide is Polyadenylate-binding protein 8 (PAB8) (Arabidopsis thaliana (Mouse-ear cress)).